Here is a 374-residue protein sequence, read N- to C-terminus: Regulator of G-protein signaling 20 (374 aa).

Positions 1 to 11 (MPRLSQDNQQG) are enriched in polar residues. 2 disordered regions span residues 1 to 21 (MPRL…RPSR) and 135 to 158 (PPGG…PPMG). Positions 12-21 (HQKHFSRPSR) are enriched in basic residues. The region spanning 248–364 (SFDKLMLTPA…MNSALYKDLL (117 aa)) is the RGS domain.

Forms a complex with G(alpha)z/i2 subunits and mu-opioid receptors; the formation of this complex results in mu-opioid receptor desensitization. Interacts with OPRM1. Post-translationally, fatty acylated. Heavily palmitoylated in the cysteine string motif. In terms of processing, N- and O-glycosylated in synapsomal membranes. Serine phosphorylated in synapsomal membranes. Post-translationally, sumoylated with SUMO1 and SUMO2 in synaptosomes. The sumoylated forms act as a scaffold for sequestering mu-opioid receptor-activated G(alpha) subunits. As to expression, retinal-specific. Expressed throughout the retina, including photoreceptors.

Its subcellular location is the membrane. The protein resides in the nucleus. It is found in the cytoplasm. Its function is as follows. Inhibits signal transduction by increasing the GTPase activity of G protein alpha subunits thereby driving them into their inactive GDP-bound form. Binds selectively to G(z)-alpha and G(alpha)-i2 subunits, accelerates their GTPase activity and regulates their signaling activities. The G(z)-alpha activity is inhibited by the phosphorylation and palmitoylation of the G-protein. Negatively regulates mu-opioid receptor-mediated activation of the G-proteins. The polypeptide is Regulator of G-protein signaling 20 (RGS20) (Bos taurus (Bovine)).